The following is a 193-amino-acid chain: Superoxide dismutase [Fe] (193 aa).

Fe cation-binding residues include His-27, His-74, Asp-157, and His-161.

Belongs to the iron/manganese superoxide dismutase family. Homodimer. It depends on Fe cation as a cofactor.

The catalysed reaction is 2 superoxide + 2 H(+) = H2O2 + O2. Destroys superoxide anion radicals which are normally produced within the cells and which are toxic to biological systems. The sequence is that of Superoxide dismutase [Fe] (sodB) from Salmonella typhimurium (strain LT2 / SGSC1412 / ATCC 700720).